The chain runs to 197 residues: FMN-dependent NADH:quinone oxidoreductase 1 (197 aa).

FMN-binding positions include serine 10, 16-18, 93-96, and 137-140; these read SQS, MYNF, and TRGG.

The protein belongs to the azoreductase type 1 family. As to quaternary structure, homodimer. The cofactor is FMN.

It catalyses the reaction 2 a quinone + NADH + H(+) = 2 a 1,4-benzosemiquinone + NAD(+). It carries out the reaction N,N-dimethyl-1,4-phenylenediamine + anthranilate + 2 NAD(+) = 2-(4-dimethylaminophenyl)diazenylbenzoate + 2 NADH + 2 H(+). Its function is as follows. Quinone reductase that provides resistance to thiol-specific stress caused by electrophilic quinones. Functionally, also exhibits azoreductase activity. Catalyzes the reductive cleavage of the azo bond in aromatic azo compounds to the corresponding amines. This is FMN-dependent NADH:quinone oxidoreductase 1 from Photobacterium profundum (strain SS9).